The primary structure comprises 405 residues: Fragilysin (405 aa).

The N-terminal stretch at 1–25 (MFILNFNKMKNVKLLLMLGTAALLA) is a signal peptide. His356 contributes to the Zn(2+) binding site. Glu357 is an active-site residue. 2 residues coordinate Zn(2+): His360 and His366.

It belongs to the peptidase M10C family. Requires Zn(2+) as cofactor.

It is found in the secreted. The enzyme catalyses Broad proteolytic specificity, bonds hydrolyzed includes -Gly-|-Leu-, -Met-|-Leu-, -Phe-|-Leu-, -Cys-|-Leu-, -Leu-|-Gly-.. Diarrheal toxin that hydrolyzes gelatin, azocoll, actin, tropomyosin, and fibrinogen. The polypeptide is Fragilysin (btfP) (Bacteroides fragilis).